A 523-amino-acid polypeptide reads, in one-letter code: NADH-ubiquinone oxidoreductase chain 4 (523 aa).

Transmembrane regions (helical) follow at residues 22 to 42 (FFIM…AIAL), 62 to 82 (LLTF…SALF), 120 to 140 (ISLF…LVSW), 149 to 169 (EYCI…SVLD), 170 to 190 (LLLF…IIGV), 204 to 224 (FFLY…LIYF), 246 to 266 (ILWL…PVHI), 276 to 296 (PTAG…YGFL), 303 to 323 (FPYA…IAIV), 338 to 358 (IIAY…FSQN), 366 to 386 (ILLM…VGVL), 404 to 424 (TMPI…SLPG), 444 to 464 (FVAF…LWLC), and 488 to 508 (FFMF…PEPF).

Belongs to the complex I subunit 4 family.

It is found in the mitochondrion membrane. The catalysed reaction is a ubiquinone + NADH + 5 H(+)(in) = a ubiquinol + NAD(+) + 4 H(+)(out). Functionally, core subunit of the mitochondrial membrane respiratory chain NADH dehydrogenase (Complex I) that is believed to belong to the minimal assembly required for catalysis. Complex I functions in the transfer of electrons from NADH to the respiratory chain. The immediate electron acceptor for the enzyme is believed to be ubiquinone. The polypeptide is NADH-ubiquinone oxidoreductase chain 4 (ND4) (Prototheca wickerhamii).